A 901-amino-acid chain; its full sequence is Protein translocase subunit SecA (901 aa).

Residues glutamine 87, 105-109 (GEGKT), and aspartate 512 contribute to the ATP site. The disordered stretch occupies residues 859 to 901 (HQDDDSAAAAALAAQTGERKVGRNDPCPCGSGKKYKQCHGRLQ). 4 residues coordinate Zn(2+): cysteine 885, cysteine 887, cysteine 896, and histidine 897. Residues 891–901 (KKYKQCHGRLQ) show a composition bias toward basic residues.

Belongs to the SecA family. As to quaternary structure, monomer and homodimer. Part of the essential Sec protein translocation apparatus which comprises SecA, SecYEG and auxiliary proteins SecDF-YajC and YidC. Zn(2+) serves as cofactor.

Its subcellular location is the cell inner membrane. The protein resides in the cytoplasm. The enzyme catalyses ATP + H2O + cellular proteinSide 1 = ADP + phosphate + cellular proteinSide 2.. In terms of biological role, part of the Sec protein translocase complex. Interacts with the SecYEG preprotein conducting channel. Has a central role in coupling the hydrolysis of ATP to the transfer of proteins into and across the cell membrane, serving both as a receptor for the preprotein-SecB complex and as an ATP-driven molecular motor driving the stepwise translocation of polypeptide chains across the membrane. The sequence is that of Protein translocase subunit SecA from Escherichia coli O6:K15:H31 (strain 536 / UPEC).